Consider the following 151-residue polypeptide: Large ribosomal subunit protein bL9 (151 aa).

The protein belongs to the bacterial ribosomal protein bL9 family.

In terms of biological role, binds to the 23S rRNA. This Bordetella avium (strain 197N) protein is Large ribosomal subunit protein bL9.